The sequence spans 423 residues: Guanine nucleotide-binding protein subunit beta (423 aa).

WD repeat units follow at residues Gly-90 to Asp-120, Leu-132 to Arg-162, Gly-179 to Asp-208, Asp-220 to Asp-256, Val-268 to Asp-298, Asp-348 to Asp-377, and Gly-389 to Ser-419.

The protein belongs to the WD repeat G protein beta family. In terms of assembly, g proteins are composed of 3 units, alpha, beta and gamma. The beta-gamma subunit complex (STE4-STE18 complex) interacts with PLP1 and PLP2. Interacts with SYG1.

Functionally, implicated in the a- and alpha-factor response pathway. The beta and gamma chains of the putative yeast mating response pathway G protein play a positive role in initiation of the mating response. The beta and gamma chains are required for the GTPase activity, for replacement of GDP by GTP, and for G protein-effector interaction. This Saccharomyces cerevisiae (strain ATCC 204508 / S288c) (Baker's yeast) protein is Guanine nucleotide-binding protein subunit beta (STE4).